A 354-amino-acid chain; its full sequence is Guanine nucleotide-binding protein G(i) subunit alpha-1 (354 aa).

The N-myristoyl glycine moiety is linked to residue G2. The S-palmitoyl cysteine moiety is linked to residue C3. The G-alpha domain occupies 32–354 (REVKLLLLGA…KNNLKDCGLF (323 aa)). The segment at 35 to 48 (KLLLLGAGESGKST) is G1 motif. GTP is bound by residues 43 to 48 (ESGKST), 150 to 151 (DS), and 175 to 178 (LRTR). Mg(2+) is bound at residue S47. The segment at 173 to 181 (DVLRTRVKT) is G2 motif. Residue T181 participates in Mg(2+) binding. Residues 196-205 (FKMFDVGGQR) form a G3 motif region. Residues 200–204 (DVGGQ), 269–272 (NKKD), and A326 contribute to the GTP site. The tract at residues 265–272 (ILFLNKKD) is G4 motif. The tract at residues 324–329 (TCATDT) is G5 motif.

This sequence belongs to the G-alpha family. G(i/o/t/z) subfamily. In terms of assembly, heterotrimeric G proteins are composed of 3 units; alpha, beta and gamma. The alpha chain contains the guanine nucleotide binding site. Part of a spindle orientation complex. Identified in complex with the beta subunit GNB1 and the gamma subunit GNG1. Identified in complex with the beta subunit GNB1 and the gamma subunit GNG2. GTP binding causes dissociation of the heterotrimer, liberating the individual subunits so that they can interact with downstream effector proteins. Myristoylation at Gly-2 is required for membrane anchoring before palmitoylation. In terms of processing, palmitoylation at Cys-3 varies with membrane lipid composition.

The protein resides in the nucleus. The protein localises to the cytoplasm. It is found in the cell membrane. Its subcellular location is the cytoskeleton. It localises to the microtubule organizing center. The protein resides in the centrosome. The protein localises to the cell cortex. It is found in the membrane. The catalysed reaction is GTP + H2O = GDP + phosphate + H(+). Its function is as follows. Guanine nucleotide-binding proteins (G proteins) function as transducers downstream of G protein-coupled receptors (GPCRs) in numerous signaling cascades. The alpha chain contains the guanine nucleotide binding site and alternates between an active, GTP-bound state and an inactive, GDP-bound state. Signaling by an activated GPCR promotes GDP release and GTP binding. The alpha subunit has a low GTPase activity that converts bound GTP to GDP, thereby terminating the signal. Both GDP release and GTP hydrolysis are modulated by numerous regulatory proteins. Signaling is mediated via effector proteins, such as adenylate cyclase. Inhibits adenylate cyclase activity, leading to decreased intracellular cAMP levels. Required for cortical dynein-dynactin complex recruitment during metaphase. The chain is Guanine nucleotide-binding protein G(i) subunit alpha-1 (gnai1) from Oryzias latipes (Japanese rice fish).